Consider the following 443-residue polypeptide: Ribulose bisphosphate carboxylase large chain (443 aa).

2 residues coordinate substrate: asparagine 89 and threonine 139. Lysine 141 serves as the catalytic Proton acceptor. Residue lysine 143 coordinates substrate. Residues lysine 167, aspartate 169, and glutamate 170 each coordinate Mg(2+). An N6-carboxylysine modification is found at lysine 167. Histidine 260 functions as the Proton acceptor in the catalytic mechanism. Arginine 261, histidine 293, and serine 345 together coordinate substrate.

This sequence belongs to the RuBisCO large chain family. Type I subfamily. As to quaternary structure, heterohexadecamer of 8 large chains and 8 small chains; disulfide-linked. The disulfide link is formed within the large subunit homodimers. Requires Mg(2+) as cofactor. In terms of processing, the disulfide bond which can form in the large chain dimeric partners within the hexadecamer appears to be associated with oxidative stress and protein turnover.

The protein resides in the plastid. Its subcellular location is the chloroplast. It catalyses the reaction 2 (2R)-3-phosphoglycerate + 2 H(+) = D-ribulose 1,5-bisphosphate + CO2 + H2O. The catalysed reaction is D-ribulose 1,5-bisphosphate + O2 = 2-phosphoglycolate + (2R)-3-phosphoglycerate + 2 H(+). Its function is as follows. RuBisCO catalyzes two reactions: the carboxylation of D-ribulose 1,5-bisphosphate, the primary event in carbon dioxide fixation, as well as the oxidative fragmentation of the pentose substrate in the photorespiration process. Both reactions occur simultaneously and in competition at the same active site. The chain is Ribulose bisphosphate carboxylase large chain from Buddleja davidii (Butterfly bush).